We begin with the raw amino-acid sequence, 103 residues long: Large ribosomal subunit protein bL21 (103 aa).

This sequence belongs to the bacterial ribosomal protein bL21 family. In terms of assembly, part of the 50S ribosomal subunit. Contacts protein L20.

Functionally, this protein binds to 23S rRNA in the presence of protein L20. The chain is Large ribosomal subunit protein bL21 from Shewanella loihica (strain ATCC BAA-1088 / PV-4).